Consider the following 728-residue polypeptide: 1,4-alpha-glucan branching enzyme GlgB (728 aa).

Asp-405 acts as the Nucleophile in catalysis. Glu-458 functions as the Proton donor in the catalytic mechanism.

The protein belongs to the glycosyl hydrolase 13 family. GlgB subfamily. As to quaternary structure, monomer.

The catalysed reaction is Transfers a segment of a (1-&gt;4)-alpha-D-glucan chain to a primary hydroxy group in a similar glucan chain.. The protein operates within glycan biosynthesis; glycogen biosynthesis. In terms of biological role, catalyzes the formation of the alpha-1,6-glucosidic linkages in glycogen by scission of a 1,4-alpha-linked oligosaccharide from growing alpha-1,4-glucan chains and the subsequent attachment of the oligosaccharide to the alpha-1,6 position. The polypeptide is 1,4-alpha-glucan branching enzyme GlgB (Escherichia coli O139:H28 (strain E24377A / ETEC)).